An 87-amino-acid polypeptide reads, in one-letter code: Large ribosomal subunit protein bL27 (87 aa).

Residues 1-22 (MAHKKAGGSSRNGRDSQGQRRG) are disordered.

The protein belongs to the bacterial ribosomal protein bL27 family.

This is Large ribosomal subunit protein bL27 from Nitratidesulfovibrio vulgaris (strain DP4) (Desulfovibrio vulgaris).